We begin with the raw amino-acid sequence, 362 residues long: 3-dehydroquinate synthase (362 aa).

NAD(+)-binding positions include Asp-71 to Lys-76, Gly-105 to Asp-109, Thr-129 to Thr-130, Lys-142, Lys-151, and Cys-169 to Thr-172. 3 residues coordinate Zn(2+): Glu-184, His-247, and His-264.

The protein belongs to the sugar phosphate cyclases superfamily. Dehydroquinate synthase family. It depends on Co(2+) as a cofactor. Zn(2+) is required as a cofactor. NAD(+) serves as cofactor.

The protein localises to the cytoplasm. The enzyme catalyses 7-phospho-2-dehydro-3-deoxy-D-arabino-heptonate = 3-dehydroquinate + phosphate. It functions in the pathway metabolic intermediate biosynthesis; chorismate biosynthesis; chorismate from D-erythrose 4-phosphate and phosphoenolpyruvate: step 2/7. Catalyzes the conversion of 3-deoxy-D-arabino-heptulosonate 7-phosphate (DAHP) to dehydroquinate (DHQ). This is 3-dehydroquinate synthase from Enterobacter sp. (strain 638).